The primary structure comprises 120 residues: UPF0231 protein YacL (120 aa).

The protein belongs to the UPF0231 family.

This is UPF0231 protein YacL from Escherichia fergusonii (strain ATCC 35469 / DSM 13698 / CCUG 18766 / IAM 14443 / JCM 21226 / LMG 7866 / NBRC 102419 / NCTC 12128 / CDC 0568-73).